A 158-amino-acid polypeptide reads, in one-letter code: C-type lectin lectoxin-Enh5 (158 aa).

Residues Met-1–Gly-23 form the signal peptide. 3 disulfide bridges follow: Cys-26–Cys-37, Cys-54–Cys-154, and Cys-129–Cys-146. Residues Arg-33–Gln-155 form the C-type lectin domain. The short motif at Glu-119–Asn-121 is the Mannose-binding element. Glu-127, Asn-142, and Asp-143 together coordinate Ca(2+).

This sequence belongs to the true venom lectin family. Expressed by the venom gland.

It localises to the secreted. In terms of biological role, mannose-binding lectin which recognizes specific carbohydrate structures and agglutinates a variety of animal cells by binding to cell-surface glycoproteins and glycolipids. May be a calcium-dependent lectin. The polypeptide is C-type lectin lectoxin-Enh5 (Pseudoferania polylepis (Macleay's water snake)).